The sequence spans 442 residues: Mannosylglycerate hydrolase (442 aa).

Residues Tyr-38, 42–45 (WSWD), Tyr-90, Gln-116, and Gly-176 contribute to the substrate site. The active-site Proton donor is Asp-178. Substrate is bound by residues Arg-213 and 369–370 (YW). Glu-413 acts as the Proton acceptor in catalysis.

The protein belongs to the glycosyl hydrolase 63 family. In terms of assembly, homodimer in solution.

The enzyme catalyses (2R)-2-O-(alpha-D-mannosyl)-glycerate + H2O = D-mannose + (R)-glycerate. It carries out the reaction (2R)-2-O-(alpha-D-glucopyranosyl)-glycerate + H2O = (R)-glycerate + D-glucose. Its activity is regulated as follows. Activity is not stimulated by divalent cations and not affected in the presence of EDTA. Hydrolase that catalyzes the hydrolysis of mannosylglycerate (MG), a solute produced in response to osmotic stress in thermophiles, into mannose and glycerate. Can also hydrolyze glucosylglycerate (GG) to glucose and glycerate, with similar catalytic efficiency. Is highly specific for MG and GG, and cannot use mannosylglyceramide (MGA), glucosylglycerol, mannosylglucosylglycerate (MGG), glucosylglucosylglycerate (GGG) or trehalose as substrates. This is Mannosylglycerate hydrolase from Rubrobacter radiotolerans (Arthrobacter radiotolerans).